Consider the following 164-residue polypeptide: uncharacterized protein (164 aa).

This is an uncharacterized protein from Acanthamoeba polyphaga mimivirus (APMV).